Here is a 348-residue protein sequence, read N- to C-terminus: 4-hydroxy-2-oxovalerate aldolase 1 (348 aa).

The Pyruvate carboxyltransferase domain maps to 8–260 (ITVHDMTLRD…QTGVDVWAIQ (253 aa)). Residue 16-17 (RD) coordinates substrate. Asp-17 contributes to the Mn(2+) binding site. The active-site Proton acceptor is His-20. 2 residues coordinate substrate: Ser-170 and His-199. Residues His-199 and His-201 each contribute to the Mn(2+) site. Tyr-290 is a substrate binding site.

It belongs to the 4-hydroxy-2-oxovalerate aldolase family.

The catalysed reaction is (S)-4-hydroxy-2-oxopentanoate = acetaldehyde + pyruvate. The polypeptide is 4-hydroxy-2-oxovalerate aldolase 1 (Cupriavidus metallidurans (strain ATCC 43123 / DSM 2839 / NBRC 102507 / CH34) (Ralstonia metallidurans)).